A 237-amino-acid polypeptide reads, in one-letter code: Uridylate kinase (237 aa).

Residue 9–12 participates in ATP binding; the sequence is KLSG. Residues 17–22 are involved in allosteric activation by GTP; that stretch reads GTQGYG. A UMP-binding site is contributed by Gly51. Gly52 and Arg56 together coordinate ATP. UMP-binding positions include Asp71 and 132 to 139; that span reads CGNPFFTT. Residues Thr159, Tyr165, and Asp168 each coordinate ATP.

Belongs to the UMP kinase family. Homohexamer.

Its subcellular location is the cytoplasm. It carries out the reaction UMP + ATP = UDP + ADP. Its pathway is pyrimidine metabolism; CTP biosynthesis via de novo pathway; UDP from UMP (UMPK route): step 1/1. Allosterically activated by GTP. Inhibited by UTP. Its function is as follows. Catalyzes the reversible phosphorylation of UMP to UDP. The polypeptide is Uridylate kinase (Parasynechococcus marenigrum (strain WH8102)).